The chain runs to 370 residues: Anhydro-N-acetylmuramic acid kinase (370 aa).

13 to 20 (GTSLDGVD) is an ATP binding site.

The protein belongs to the anhydro-N-acetylmuramic acid kinase family.

It carries out the reaction 1,6-anhydro-N-acetyl-beta-muramate + ATP + H2O = N-acetyl-D-muramate 6-phosphate + ADP + H(+). Its pathway is amino-sugar metabolism; 1,6-anhydro-N-acetylmuramate degradation. It functions in the pathway cell wall biogenesis; peptidoglycan recycling. Its function is as follows. Catalyzes the specific phosphorylation of 1,6-anhydro-N-acetylmuramic acid (anhMurNAc) with the simultaneous cleavage of the 1,6-anhydro ring, generating MurNAc-6-P. Is required for the utilization of anhMurNAc either imported from the medium or derived from its own cell wall murein, and thus plays a role in cell wall recycling. This chain is Anhydro-N-acetylmuramic acid kinase, found in Vibrio cholerae serotype O1 (strain ATCC 39315 / El Tor Inaba N16961).